We begin with the raw amino-acid sequence, 192 residues long: Phosphoheptose isomerase (192 aa).

An SIS domain is found at 34–192 (VVDAYRAGNK…VERELFLKGN (159 aa)). A substrate-binding site is contributed by 49–51 (NGG). 2 residues coordinate Zn(2+): His-58 and Glu-62. Substrate-binding positions include Glu-62, 91-92 (ND), 117-119 (STS), Ser-122, and Gln-169. Gln-169 and His-177 together coordinate Zn(2+).

This sequence belongs to the SIS family. GmhA subfamily. Homotetramer. The cofactor is Zn(2+).

It is found in the cytoplasm. It catalyses the reaction 2 D-sedoheptulose 7-phosphate = D-glycero-alpha-D-manno-heptose 7-phosphate + D-glycero-beta-D-manno-heptose 7-phosphate. It participates in carbohydrate biosynthesis; D-glycero-D-manno-heptose 7-phosphate biosynthesis; D-glycero-alpha-D-manno-heptose 7-phosphate and D-glycero-beta-D-manno-heptose 7-phosphate from sedoheptulose 7-phosphate: step 1/1. Functionally, catalyzes the isomerization of sedoheptulose 7-phosphate in D-glycero-D-manno-heptose 7-phosphate. The sequence is that of Phosphoheptose isomerase from Geobacter sp. (strain M21).